The following is a 1135-amino-acid chain: MASGGNQSSPPPPAAAASSEEEEEDGDTADRAQPAGSPSHQIQQRFEELCSRLNMDEAARAEAWSSYRSMSESYTLEGNDLHWLACALYVACRKSVPTVSKGTAEGNYVSLTRILRCSEQSLIEFFNKMKKWEDMANLPPHFRERTERLERNFTVSAVIFKKYEPIFQDIFKYPQEEQPRQQRGRKQRRQPCTTSEIFHFCWVLFIYAKGNFPMISDDLVNSYHLLLCALDLVYGNALQCSNRKELVNPNFKGVSEDGHPRDSHPSSDPPCVIEKLCSLHDGLVLEAKGIKQHFWKPYIRKLFEKKLLRGKEENLTGFLEPGNFAESFKAVNKAYEEYVLATGSLDERIFLGEDAEEEVGTFSRCVSAASGTESAERTQMRDILQQHLDKSKTLRVCNPLTGVRYVQENSPCVTPVSTATHSLNRLHTMLAGLRNAPSEKLEQILRSCSRDPTRAIADRLREMYEIYSQHFQPDENVSNCAKEMANKHFRFAEMLYYKVLESVIEQEQKRLGDMDLSGVLEQDAFHKSLLACCLEVVAFSYKPPGNFPFIAEIFDVPHYHFYKVIEVFIRAEDGLCREVVKHLNQIEEQILDHLAWKTKSPLWDRIRDNENRVPTCEEVTPPHNLERTDEIYIAGSPLTPRRVGEVRTDAGGLGRSVTSPTTLYDRYSSPTVSTTRRRLFESDSPSEGSTAGRIPPQPLVNAVPVQNVSGETVSVTPVPGQTLVTMATATVTANNGQTVTIPVQGIANENGGITFFPVQVNVGGQAQAVTGSIQPLSAQALAGSLSSQQVTGTTLQVPGPVAIQQISPGGQQQNQGQPLTSSSIRPRKTSSLSLFFRKVYYLAGVRLRDLCTKLDISDELRKKIWTCFEFSIVQCPELMMDRHLDQLLMCAIYVMAKVTKEDKSFQNIMRCYRTQPQARSQVYRSVLIKGKRRNSGSCENRSHQNSPTELNTDRASRDSSPVMRSNSTLPVPQPSSAPPTPTRLTGANSDIEEEERGDLIQFYNNIYRKQIQTFAMKYSQANSQMDTPPLSPYPFVRTGSPRRVQLSQSHPIYISPHKNEAMLSPREKIFYYFSNSPSKRLREINSMIRTGETPTKKRGILLDDGSESPAKRICPENHSALLRRLQDVANDRGSH.

The disordered stretch occupies residues 1–43; the sequence is MASGGNQSSPPPPAAAASSEEEEEDGDTADRAQPAGSPSHQIQ. Residue Ser410 is modified to Phosphoserine. Thr414 carries the post-translational modification Phosphothreonine. The domain A stretch occupies residues 414–613; it reads TPVSTATHSL…DRIRDNENRV (200 aa). Positions 414 to 1021 are pocket; binds E1A; the sequence is TPVSTATHSL…QTFAMKYSQA (608 aa). Ser417 carries an O-linked (GlcNAc) serine glycan. A spacer region spans residues 614-824; the sequence is PTCEEVTPPH…QGQPLTSSSI (211 aa). The residue at position 636 (Ser636) is a Phosphoserine. Thr639 is modified (phosphothreonine). Disordered regions lie at residues 649–698, 806–825, and 932–995; these read DAGG…PPQP, ISPG…SSIR, and RRNS…EEEE. Over residues 656–674 the composition is skewed to polar residues; it reads SVTSPTTLYDRYSSPTVST. A phosphoserine mark is found at Ser659, Ser669, and Ser684. Low complexity predominate over residues 806-818; it reads ISPGGQQQNQGQP. Residues 825 to 1021 form a domain B region; the sequence is RPRKTSSLSL…QTFAMKYSQA (197 aa). Composition is skewed to polar residues over residues 935–950 and 958–969; these read SGSC…PTEL and DSSPVMRSNSTL. Residues Ser942, Ser946, Ser960, Ser965, and Ser967 each carry the phosphoserine modification. The residue at position 968 (Thr968) is a Phosphothreonine. A compositionally biased stretch (pro residues) spans 971–981; it reads VPQPSSAPPTP. 2 positions are modified to phosphoserine: Ser975 and Ser976. Thr980 carries the post-translational modification Phosphothreonine. Phosphoserine is present on residues Ser1031, Ser1064, Ser1076, and Ser1108.

It belongs to the retinoblastoma protein (RB) family. Interacts with AATF, KMT5B and KMT5C. Component of the DREAM complex (also named LINC complex) at least composed of E2F4, E2F5, LIN9, LIN37, LIN52, LIN54, MYBL1, MYBL2, RBL1, RBL2, RBBP4, TFDP1 and TFDP2. The complex exists in quiescent cells where it represses cell cycle-dependent genes. It dissociates in S phase when LIN9, LIN37, LIN52 and LIN54 form a subcomplex that binds to MYBL2. Interacts with USP4. Part of the peroxisome proliferator activated receptor alpha (PPAR-alpha) interacting complex (PRIC). Interacts with RINT1. Interacts with PML. Interacts with RBBP9. Interacts with CD53. During G0 and early G1 phase of the cell cycle, phosphorylated on Ser-636 and on 5 sites within the domain B. Phosphorylation on Ser-669 in G1 leads to its ubiquitin-dependent proteolysis.

Its subcellular location is the nucleus. Functionally, key regulator of entry into cell division. Directly involved in heterochromatin formation by maintaining overall chromatin structure and, in particular, that of constitutive heterochromatin by stabilizing histone methylation. Recruits and targets histone methyltransferases KMT5B and KMT5C, leading to epigenetic transcriptional repression. Controls histone H4 'Lys-20' trimethylation. Probably acts as a transcription repressor by recruiting chromatin-modifying enzymes to promoters. Potent inhibitor of E2F-mediated trans-activation, associates preferentially with E2F5. Binds to cyclins A and E. Binds to and may be involved in the transforming capacity of the adenovirus E1A protein. May act as a tumor suppressor. This is Retinoblastoma-like protein 2 (Rbl2) from Rattus norvegicus (Rat).